The chain runs to 445 residues: Beclin-1 (445 aa).

Positions 103 to 122 match the BH3 motif; the sequence is TMENLSRRLKVTGDLFDIMS. The stretch at 137–264 forms a coiled coil; the sequence is DTLLDQLDTQ…QLDKLKKTNV (128 aa). The interval 240 to 445 is evolutionary conserved domain (ECD); that stretch reads DDLKSVENQM…AWVSSQFYNK (206 aa). The tract at residues 420–445 is required for membrane-association; that stretch reads WTKALKFMLTNLKWGLAWVSSQFYNK.

Belongs to the beclin family. Component of the PI3K (PI3KC3/PI3K-III/class III phosphatidylinositol 3-kinase) complex. Post-translationally, may be proteolytically processed by caspases; the C-terminal fragment(s) may induce apoptosis.

It localises to the cytoplasm. It is found in the golgi apparatus. The protein resides in the trans-Golgi network membrane. The protein localises to the endosome membrane. Its subcellular location is the endoplasmic reticulum membrane. It localises to the mitochondrion membrane. It is found in the cytoplasmic vesicle. The protein resides in the autophagosome. Plays a central role in autophagy. Acts as core subunit of different PI3K complex forms that mediate formation of phosphatidylinositol 3-phosphate and are believed to play a role in multiple membrane trafficking pathways: PI3KC3-C1 is involved in initiation of autophagosomes and PI3KC3-C2 in maturation of autophagosomes and endocytosis. Involved in regulation of degradative endocytic trafficking and required for the abscission step in cytokinesis, probably in the context of PI3KC3-C2. Essential for the formation of PI3KC3-C2 but not PI3KC3-C1 PI3K complex forms. Involved in endocytosis including endosome formation in neuronal cells. This Xenopus tropicalis (Western clawed frog) protein is Beclin-1 (becn1).